Here is a 1141-residue protein sequence, read N- to C-terminus: MAELVTSPAYRAYLDGLIAGLDRAMEIANKAKSLGVDPRPYVEIPIASDLAGRVEALLGYKGVAAKIRELEDRMSREEAALKIGDAFVGKEFGESTREDILDHAIRTSMALLTEGVVAAPTEGIGKVAVRRNDDGTEYLSIYYAGPIRSAGGTAQALSVLVGDYVRRLLNIDRYKPREEEIERYVEEIKQYNNIQSMQYLPKDDDIRLIIRNCPICIDGEPTEQEEISGYRNLERVETNVVRGGMGLVIAEGIGLKAPKIQKNVAKMNLDGWEWLEELISGNTPAQEVEEEPGVHPKDKYMRDMLAGRPSFSYPMRKGGFRFRLGRCRNTGLATCGFNPATLHILDDYLAVGTQMKVERPGKACGVVPCTDIEGPTVRLKSGELRRIDTLDDANKYYDQVEYILDIGEILISFGEFMENNHVLMPPSYCEEWWIQEGGPRHPKNEAEALSFVLEGAYLHPDYTWFWDDCSEGQLIFLSDKVAGTGSLREGVLYIPEDPAVKSVLEELLVPHTVEEGFYVVRTPLALIMGLGLTDTLAKSPTWKTLPPFSNGLSMAISLSGLKMRSKAGTRVGGRMGRPGKSAPRKMKPPVHVLFPIGESGGMKRSIDNAAKICSSDSEENFRGTSVTTGQVEGLIQVQTGERRCPKCGTVTFKSRCADCGTHTDAVYRCPHCNQLGEEGQESCPKCGANLVCSKESIVSLGQEYAAALKNVGMSASSSPELKGVRGLISRERVVEPLEKGLLRAKNNIFVFRDGTIRYDMIDLPLTHFRPAEVGVSVEKLRSIGYTQDMHGADLTDASQLVELHPQDIMVSVDCGEYLVRVAAYVDELLEKVYGMEAFYHVKTPEDLVGHLVMGLAPHTSAGVLARIVGFTKAKAGYAHPYYHAAKRRNCDGDEDCVMLLMDGLLNFSRSFLPSTRGGTMDAPLVLTTTLNPKEVDKETLNVDVMPRYPLEVYTACLTYRAPKEVGKFVDYVEKRVETPGQFEGFSFTHDTTDISEGPIDTMYTNPILKGTADKIKAELGLADRIRAVDTNDLAERIINSHLMPDMIGNLRSFSKQAFRCPKCKTSYRRIPVSGKCNKCGGPVKATMHKGNVTKYLEISKYMAEHYTLSDYTNQRIQVTEMNINSTFGEEEKVQMDLSDFF.

The tract at residues Ala567–Lys587 is disordered.

Belongs to the archaeal DNA polymerase II family. Heterodimer of a large subunit and a small subunit.

The enzyme catalyses DNA(n) + a 2'-deoxyribonucleoside 5'-triphosphate = DNA(n+1) + diphosphate. It carries out the reaction Exonucleolytic cleavage in the 3'- to 5'-direction to yield nucleoside 5'-phosphates.. In terms of biological role, possesses two activities: a DNA synthesis (polymerase) and an exonucleolytic activity that degrades single-stranded DNA in the 3'- to 5'-direction. Has a template-primer preference which is characteristic of a replicative DNA polymerase. In Methanocorpusculum labreanum (strain ATCC 43576 / DSM 4855 / Z), this protein is DNA polymerase II large subunit.